Here is a 336-residue protein sequence, read N- to C-terminus: Ketol-acid reductoisomerase (NADP(+)) (336 aa).

A KARI N-terminal Rossmann domain is found at 1–181 (MNVYYDKDCN…GGGRTGIIET (181 aa)). NADP(+) contacts are provided by residues 24–27 (YGSQ), arginine 47, serine 50, serine 52, and 82–85 (DEFQ). Residue histidine 107 is part of the active site. Glycine 133 contributes to the NADP(+) binding site. The KARI C-terminal knotted domain maps to 182-327 (TFQDETETDL…GKLRSMMPWI (146 aa)). 4 residues coordinate Mg(2+): aspartate 190, glutamate 194, glutamate 226, and glutamate 230. A substrate-binding site is contributed by serine 251.

This sequence belongs to the ketol-acid reductoisomerase family. Mg(2+) is required as a cofactor.

It carries out the reaction (2R)-2,3-dihydroxy-3-methylbutanoate + NADP(+) = (2S)-2-acetolactate + NADPH + H(+). The enzyme catalyses (2R,3R)-2,3-dihydroxy-3-methylpentanoate + NADP(+) = (S)-2-ethyl-2-hydroxy-3-oxobutanoate + NADPH + H(+). It participates in amino-acid biosynthesis; L-isoleucine biosynthesis; L-isoleucine from 2-oxobutanoate: step 2/4. It functions in the pathway amino-acid biosynthesis; L-valine biosynthesis; L-valine from pyruvate: step 2/4. Involved in the biosynthesis of branched-chain amino acids (BCAA). Catalyzes an alkyl-migration followed by a ketol-acid reduction of (S)-2-acetolactate (S2AL) to yield (R)-2,3-dihydroxy-isovalerate. In the isomerase reaction, S2AL is rearranged via a Mg-dependent methyl migration to produce 3-hydroxy-3-methyl-2-ketobutyrate (HMKB). In the reductase reaction, this 2-ketoacid undergoes a metal-dependent reduction by NADPH to yield (R)-2,3-dihydroxy-isovalerate. The protein is Ketol-acid reductoisomerase (NADP(+)) of Geotalea daltonii (strain DSM 22248 / JCM 15807 / FRC-32) (Geobacter daltonii).